Reading from the N-terminus, the 42-residue chain is Daisho1 (42 aa).

The first 20 residues, 1 to 20 (MKFFQAAALLLAMFAALANA), serve as a signal peptide directing secretion. Residues 21–26 (EPVPQP) constitute a propeptide, removed by a dipeptidylpeptidase. At T41 the chain carries Threonine amide.

As to expression, hemolymph (at protein level).

The protein resides in the secreted. In terms of biological role, peptide which plays a role in the humoral immune response to a subset of filamentous fungi, including F.oxysporum and F.verticillioides. The polypeptide is Daisho1 (Drosophila melanogaster (Fruit fly)).